The chain runs to 220 residues: Putative 3-methyladenine DNA glycosylase (220 aa).

Belongs to the DNA glycosylase MPG family.

This chain is Putative 3-methyladenine DNA glycosylase, found in Rickettsia bellii (strain RML369-C).